Here is a 176-residue protein sequence, read N- to C-terminus: Probable Brix domain-containing ribosomal biogenesis protein (176 aa).

A Brix domain is found at 6-176; it reads IEIVFTSSRD…QLYDRNKNIN (171 aa).

Probably involved in the biogenesis of the ribosome. The polypeptide is Probable Brix domain-containing ribosomal biogenesis protein (Sulfurisphaera tokodaii (strain DSM 16993 / JCM 10545 / NBRC 100140 / 7) (Sulfolobus tokodaii)).